We begin with the raw amino-acid sequence, 85 residues long: Sodium channel neurotoxin MeuNaTxalpha-1 (85 aa).

A signal peptide spans 1–19 (MNSLVMISLALLVMTGVES). Residues 21–83 (RDGYIADDKN…VPIKVSGKCN (63 aa)) form the LCN-type CS-alpha/beta domain. Positions 27–31 (DDKNC) are specificity module, loop 1. Disulfide bonds link cysteine 31/cysteine 82, cysteine 35/cysteine 55, cysteine 41/cysteine 65, and cysteine 45/cysteine 67. 2 specificity module, loop regions span residues 58–62 (AGQYG) and 75–83 (PIKVSGKCN). Position 83 is an asparagine amide (asparagine 83).

This sequence belongs to the long (4 C-C) scorpion toxin superfamily. Sodium channel inhibitor family. Alpha subfamily. In terms of processing, C-terminal amidation does not appear to play an important role in activity, since the non-amidated recombinant toxin and the native toxin (which is amidated) show similar activities on all sodium channels tested. Expressed by the venom gland.

The protein localises to the secreted. Alpha toxins bind voltage-independently at site-3 of sodium channels (Nav) and inhibit the inactivation of the activated channels, thereby blocking neuronal transmission. This toxin inhibits inactivation of Nav1.6/SCN8A (EC(50)=3.1 uM) and drosophila DmNav1 (EC(50)=1.17 uM). It also shows a weak inhibition of inactivation on Nav1.2/SCN2A Nav1.3/SCN3A, and Nav1.7/SCN9A. The toxin (1 uM) does not significantly shift the midpoint of activation at the two channels, but induces a significant depolarizing shift in the V(1/2) of inactivation of the channels. The toxin has also been shown to dose-dependently stimulates intracellular signaling in DRG neurons through activation of two kinases (type II protein kinase A (PKA-II) and MAP kinases 1/3 (MAPK1/MAPK3)). Nav1.2/SCN2A is strongly suggested to be the target channel predominantly involved in this activation. In vivo, the toxin induces a dose-dependent thermal hyperalgesia lasting 30-45 minutes. The polypeptide is Sodium channel neurotoxin MeuNaTxalpha-1 (Mesobuthus eupeus (Lesser Asian scorpion)).